Consider the following 1241-residue polypeptide: ATP-dependent helicase/nuclease subunit A (1241 aa).

The 474-residue stretch at 12 to 485 folds into the UvrD-like helicase ATP-binding domain; it reads SQWTDDQWKA…IDLAKNFRSR (474 aa). 33-40 contacts ATP; that stretch reads AAAGSGKT. The region spanning 505–805 is the UvrD-like helicase C-terminal domain; it reads GEIDYDADAE…RIMTIHKSKG (301 aa).

It belongs to the helicase family. AddA subfamily. As to quaternary structure, heterodimer of AddA and AddB/RexB. The cofactor is Mg(2+).

The enzyme catalyses Couples ATP hydrolysis with the unwinding of duplex DNA by translocating in the 3'-5' direction.. It carries out the reaction ATP + H2O = ADP + phosphate + H(+). The heterodimer acts as both an ATP-dependent DNA helicase and an ATP-dependent, dual-direction single-stranded exonuclease. Recognizes the chi site generating a DNA molecule suitable for the initiation of homologous recombination. The AddA nuclease domain is required for chi fragment generation; this subunit has the helicase and 3' -&gt; 5' nuclease activities. The polypeptide is ATP-dependent helicase/nuclease subunit A (Bacillus cereus (strain ATCC 10987 / NRS 248)).